The sequence spans 101 residues: UPF0125 protein VC_0850 (101 aa).

Belongs to the UPF0125 (RnfH) family.

The polypeptide is UPF0125 protein VC_0850 (Vibrio cholerae serotype O1 (strain ATCC 39315 / El Tor Inaba N16961)).